A 716-amino-acid polypeptide reads, in one-letter code: Polyribonucleotide nucleotidyltransferase (716 aa).

Residues aspartate 490 and aspartate 496 each contribute to the Mg(2+) site. A KH domain is found at 556 to 615; it reads PKIETLTIPTDKIREVIGSGGKVIREIVETSGAKVDINDDGVIKIASNDQAAIKKAYDMI. The S1 motif domain occupies 625-693; the sequence is GQIYTGKVVK…ERGKVRLGMK (69 aa). The segment at 695 to 716 is disordered; that stretch reads VDQETGQEIQPEKKEKEEAGEA. Residues 704–716 show a composition bias toward basic and acidic residues; that stretch reads QPEKKEKEEAGEA.

It belongs to the polyribonucleotide nucleotidyltransferase family. The cofactor is Mg(2+).

It is found in the cytoplasm. It carries out the reaction RNA(n+1) + phosphate = RNA(n) + a ribonucleoside 5'-diphosphate. Functionally, involved in mRNA degradation. Catalyzes the phosphorolysis of single-stranded polyribonucleotides processively in the 3'- to 5'-direction. This chain is Polyribonucleotide nucleotidyltransferase, found in Cereibacter sphaeroides (strain ATCC 17029 / ATH 2.4.9) (Rhodobacter sphaeroides).